Consider the following 436-residue polypeptide: MPKPVIAIVGRPNVGKSTIFNRIVGERVSIVEDIPGITRDRIYSAGEWLNHEFNIIDTGGIDIGDEPFLTQIRQQAEVAIDEADVIIFMTNGRDGVTAADEEVAKILYRSKKPIVLAVNKVDNPEMRSDIYDFYSLGFGEPFPISGTHGLGLGDLLDEAANHFPKIEEEAYDDETIRFSLIGRPNVGKSSLVNALLGQERVIVSNIAGTTRDAVDTPYSKDDQDYVIIDTAGMRKKGKVYESTEKYSVLRALRAIERSDVVLVVLDGEEGIIEQDKKIAGYAHDSGRAVIIVVNKWDAVKKDEKTMKAFEENIRAHFQFLDYAPIVFLSAKTKKRTQTLLPVINEVNESHSIRVQTNVLNDVIMDAVAMNPTPTHNGSRLKIFYATQVAVKPPTFVVFVNDTELMHFSYERFLKNRLREAFGFVGTPIHIIARARD.

2 consecutive EngA-type G domains span residues 4-167 (PVIA…PKIE) and 176-351 (IRFS…ESHS). GTP contacts are provided by residues 10-17 (GRPNVGKS), 57-61 (DTGGI), 119-122 (NKVD), 182-189 (GRPNVGKS), 229-233 (DTAGM), and 294-297 (NKWD). The region spanning 352–436 (IRVQTNVLND…PIHIIARARD (85 aa)) is the KH-like domain.

This sequence belongs to the TRAFAC class TrmE-Era-EngA-EngB-Septin-like GTPase superfamily. EngA (Der) GTPase family. As to quaternary structure, associates with the 50S ribosomal subunit.

In terms of biological role, GTPase that plays an essential role in the late steps of ribosome biogenesis. This is GTPase Der from Bacillus cereus (strain G9842).